We begin with the raw amino-acid sequence, 834 residues long: Periplasmic nitrate reductase (834 aa).

The segment at residues 1–29 (MNLTRREFAKANAAAIAAAAAGLPILVRA) is a signal peptide (tat-type signal). The 57-residue stretch at 41–97 (LVWNKAPCRFCGTGCSVMVATRDGQVVATHGDIKAEVNRGINCVKGYFLSKIMYGSD) folds into the 4Fe-4S Mo/W bis-MGD-type domain. [4Fe-4S] cluster-binding residues include Cys48, Cys51, Cys55, and Cys83. Mo-bis(molybdopterin guanine dinucleotide)-binding positions include Lys85, Gln152, Asn177, Cys181, 214–221 (WGSNMAEM), 245–249 (STFEH), 264–266 (QTD), Met375, Gln379, Asn485, 511–512 (SD), Lys534, Asp561, and 721–730 (TGRVLEHWHT). Phe797 provides a ligand contact to substrate. Residues Asn805 and Lys822 each coordinate Mo-bis(molybdopterin guanine dinucleotide).

This sequence belongs to the prokaryotic molybdopterin-containing oxidoreductase family. NasA/NapA/NarB subfamily. As to quaternary structure, component of the periplasmic nitrate reductase NapAB complex composed of NapA and NapB. The cofactor is [4Fe-4S] cluster. It depends on Mo-bis(molybdopterin guanine dinucleotide) as a cofactor. Post-translationally, predicted to be exported by the Tat system. The position of the signal peptide cleavage has not been experimentally proven.

Its subcellular location is the periplasm. It catalyses the reaction 2 Fe(II)-[cytochrome] + nitrate + 2 H(+) = 2 Fe(III)-[cytochrome] + nitrite + H2O. Functionally, catalytic subunit of the periplasmic nitrate reductase complex NapAB. Receives electrons from NapB and catalyzes the reduction of nitrate to nitrite. The protein is Periplasmic nitrate reductase of Pseudomonas aeruginosa (strain LESB58).